A 360-amino-acid polypeptide reads, in one-letter code: Phospho-N-acetylmuramoyl-pentapeptide-transferase (360 aa).

Transmembrane regions (helical) follow at residues 26–46, 74–94, 97–117, 134–154, 168–188, 199–219, 236–256, 263–283, 288–308, and 338–358; these read AILG…KLIE, MGGL…GDLG, YVWV…IDDY, YILQ…TAAN, VMPQ…VGSS, GLAI…AYLS, SGEL…FLWF, VFMG…IAVL, ILLV…ILQV, and VIVR…ATLK.

It belongs to the glycosyltransferase 4 family. MraY subfamily. It depends on Mg(2+) as a cofactor.

The protein resides in the cell inner membrane. It catalyses the reaction UDP-N-acetyl-alpha-D-muramoyl-L-alanyl-gamma-D-glutamyl-meso-2,6-diaminopimeloyl-D-alanyl-D-alanine + di-trans,octa-cis-undecaprenyl phosphate = di-trans,octa-cis-undecaprenyl diphospho-N-acetyl-alpha-D-muramoyl-L-alanyl-D-glutamyl-meso-2,6-diaminopimeloyl-D-alanyl-D-alanine + UMP. It functions in the pathway cell wall biogenesis; peptidoglycan biosynthesis. Functionally, catalyzes the initial step of the lipid cycle reactions in the biosynthesis of the cell wall peptidoglycan: transfers peptidoglycan precursor phospho-MurNAc-pentapeptide from UDP-MurNAc-pentapeptide onto the lipid carrier undecaprenyl phosphate, yielding undecaprenyl-pyrophosphoryl-MurNAc-pentapeptide, known as lipid I. In Shewanella putrefaciens (strain CN-32 / ATCC BAA-453), this protein is Phospho-N-acetylmuramoyl-pentapeptide-transferase.